Here is an 880-residue protein sequence, read N- to C-terminus: Leucine--tRNA ligase (880 aa).

The short motif at 46–56 is the 'HIGH' region element; that stretch reads PYPSGALHMGH. A 'KMSKS' region motif is present at residues 638–642; that stretch reads KMSKS. Position 641 (lysine 641) interacts with ATP.

Belongs to the class-I aminoacyl-tRNA synthetase family.

Its subcellular location is the cytoplasm. It catalyses the reaction tRNA(Leu) + L-leucine + ATP = L-leucyl-tRNA(Leu) + AMP + diphosphate. This Xanthomonas oryzae pv. oryzae (strain KACC10331 / KXO85) protein is Leucine--tRNA ligase.